The primary structure comprises 238 residues: RNA-binding protein pno1 (238 aa).

Residues 162–211 form the KH domain; sequence QSRAIGRLAGKGGRTKFTIENVTKTRIVLADSKIHILGSYQNIQLARRAI.

This sequence belongs to the PNO1 family.

The protein localises to the nucleus. It is found in the nucleolus. This is RNA-binding protein pno1 (l(1)G0004) from Drosophila pseudoobscura pseudoobscura (Fruit fly).